A 251-amino-acid polypeptide reads, in one-letter code: DNA repair protein RecO (251 aa).

Belongs to the RecO family.

Involved in DNA repair and RecF pathway recombination. This chain is DNA repair protein RecO, found in Lactococcus lactis subsp. cremoris (strain SK11).